The primary structure comprises 524 residues: MPAASELERRTKRSKSRNKISKPIANMLSVIAFSICISPIVYFLIRSIYYLVFHPLSDYPGPKLWAISRIPWNYVNLQGDLAWRIRDMHLHYNSSVIRIAPDELSYTSSTALKKIDGTPPPREFLKCLDGRGIAPAVVNRRRSIVTETPERHTILRRALQPAFSERALRDQEDFFRDHTDRLIAQLRKPQYGVTEQNILRWFALLSFDIMSDLAFGQPAGCLDLVDEPWLGVIGSRVKSIVWYQFAVYYRIEWILKWIMPKAAMEARKRHQALTLQKVQRRIEEERSGKREGKKRDFMSYILGNDKENLSNMDLFGMASAFIVAGSNTTTYTMTAFTFFVCRDSEVYAKVIAEVRDKFASDTDITMVAAGDLPYLKACIEETMRLSPPTPSALPRWVLEGGEEIDGKWVPGGVTVGVHNLAACHVPWNWHRPLEFIPERWLQTKEGEFTHDDRALHARFLMVDIMSLTCFLSSMAMNEMRLALAKLFWNFDISLSRNSGNWWITQKSYLVWEKKPLMVTIKPRH.

A helical transmembrane segment spans residues 24 to 44 (IANMLSVIAFSICISPIVYFL). Position 469 (cysteine 469) interacts with heme.

Belongs to the cytochrome P450 family. The cofactor is heme.

The protein localises to the membrane. The protein operates within secondary metabolite biosynthesis. Cytochrome P450 monooxygenase; part of the gene cluster that mediates the biosynthesis of alternapyrone derivatives. Alternapyrone is a decaketide with octa-methylation from methionine on every C2 unit except the third unit. All the domains in the polyketide synthase alt5 are apparently involved in alternapyrone synthesis, that is, the 8 CMeT, 7 KR, 7 DH, and 4 ER reactions in the 9 KS-mediated condensation steps required for alternapyrone synthesis. the alternapyrone produced by alt5 might be intensively modified by cytochrome P450 monooxygenases alt1, alt2 and alt3 and FAD-dependent oxidoreductase alt4 present in the alt gene cluster. The protein is Cytochrome P450 monooxygenase alt1 of Alternaria solani.